Reading from the N-terminus, the 314-residue chain is 4-hydroxy-3-methylbut-2-enyl diphosphate reductase (314 aa).

Residue Cys-12 coordinates [4Fe-4S] cluster. (2E)-4-hydroxy-3-methylbut-2-enyl diphosphate-binding residues include His-43 and His-81. 2 residues coordinate dimethylallyl diphosphate: His-43 and His-81. Isopentenyl diphosphate-binding residues include His-43 and His-81. Residue Cys-103 participates in [4Fe-4S] cluster binding. His-131 contributes to the (2E)-4-hydroxy-3-methylbut-2-enyl diphosphate binding site. Residue His-131 coordinates dimethylallyl diphosphate. His-131 contributes to the isopentenyl diphosphate binding site. The Proton donor role is filled by Glu-133. Thr-170 is a binding site for (2E)-4-hydroxy-3-methylbut-2-enyl diphosphate. Residue Cys-198 participates in [4Fe-4S] cluster binding. (2E)-4-hydroxy-3-methylbut-2-enyl diphosphate contacts are provided by Ser-226, Asn-228, and Ser-271. Residues Ser-226, Asn-228, and Ser-271 each coordinate dimethylallyl diphosphate. Isopentenyl diphosphate-binding residues include Ser-226, Asn-228, and Ser-271.

The protein belongs to the IspH family. The cofactor is [4Fe-4S] cluster.

The catalysed reaction is isopentenyl diphosphate + 2 oxidized [2Fe-2S]-[ferredoxin] + H2O = (2E)-4-hydroxy-3-methylbut-2-enyl diphosphate + 2 reduced [2Fe-2S]-[ferredoxin] + 2 H(+). It catalyses the reaction dimethylallyl diphosphate + 2 oxidized [2Fe-2S]-[ferredoxin] + H2O = (2E)-4-hydroxy-3-methylbut-2-enyl diphosphate + 2 reduced [2Fe-2S]-[ferredoxin] + 2 H(+). Its pathway is isoprenoid biosynthesis; dimethylallyl diphosphate biosynthesis; dimethylallyl diphosphate from (2E)-4-hydroxy-3-methylbutenyl diphosphate: step 1/1. The protein operates within isoprenoid biosynthesis; isopentenyl diphosphate biosynthesis via DXP pathway; isopentenyl diphosphate from 1-deoxy-D-xylulose 5-phosphate: step 6/6. Its function is as follows. Catalyzes the conversion of 1-hydroxy-2-methyl-2-(E)-butenyl 4-diphosphate (HMBPP) into a mixture of isopentenyl diphosphate (IPP) and dimethylallyl diphosphate (DMAPP). Acts in the terminal step of the DOXP/MEP pathway for isoprenoid precursor biosynthesis. The sequence is that of 4-hydroxy-3-methylbut-2-enyl diphosphate reductase from Halalkalibacterium halodurans (strain ATCC BAA-125 / DSM 18197 / FERM 7344 / JCM 9153 / C-125) (Bacillus halodurans).